The chain runs to 89 residues: Small ribosomal subunit protein uS14A (89 aa).

This sequence belongs to the universal ribosomal protein uS14 family. In terms of assembly, part of the 30S ribosomal subunit. Contacts proteins S3 and S10.

Binds 16S rRNA, required for the assembly of 30S particles and may also be responsible for determining the conformation of the 16S rRNA at the A site. The polypeptide is Small ribosomal subunit protein uS14A (Lactiplantibacillus plantarum (strain ATCC BAA-793 / NCIMB 8826 / WCFS1) (Lactobacillus plantarum)).